Reading from the N-terminus, the 496-residue chain is Fizzy-related protein homolog (496 aa).

3 disordered regions span residues 28-51 (RRTL…FIPS), 64-88 (INEN…GKDG), and 105-166 (EKVQ…SPRK). T32 is modified (phosphothreonine). Residues 32–42 (TPASSPVSSPS) are compositionally biased toward polar residues. A Phosphoserine modification is found at S36. The tract at residues 47–52 (RFIPSR) is involved in APC/FZR1 E3 ubiquitin-protein ligase complex activity. N6-acetyllysine is present on K69. 2 stretches are compositionally biased toward basic and acidic residues: residues 76 to 86 (KAKDATSDNGK) and 106 to 126 (KVQD…EKKG). Residues S133, S138, S146, and S151 each carry the phosphoserine modification. Positions 146–160 (SPYSLSPVSNKSQKL) are enriched in polar residues. N6-acetyllysine is present on K159. WD repeat units lie at residues 182-222 (PELQ…VTRL), 227-266 (VEGD…KLSM), 269-306 (GHTA…LQSE), 311-350 (GHRQ…PVQQ), 353-395 (EHLA…PLQC), 397-438 (DTGS…QVAK), and 441-480 (GHSY…RSTK).

This sequence belongs to the WD repeat CDC20/Fizzy family. As to quaternary structure, the unphosphorylated form interacts with APC/C during mitosis. Interacts with NINL. Interacts (in complex with the anaphase promoting complex APC) with MAD2L2; inhibits FZR1-mediated APC/C activation. Interacts with SIRT2 and USP37. Interacts (via WD repeats) with MAK. Interacts with RBBP8/CtIP; this interaction leads to RBBP8 proteasomal degradation. Interacts with HECW2. Interacts with SASS6; the interaction is regulated by CENATAC and leads to SASS6 proteasomal degradation. Interacts (via N-terminus) with CCNF. Interacts with CDC6. Interacts with TK1 (via the KEN box). Acetylated. Deacetylated by SIRT2 at Lys-69 and Lys-159; deacetylation enhances the interaction of FZR1 with CDC27, leading to activation of anaphase promoting complex/cyclosome (APC/C). Post-translationally, following DNA damage, it is dephosphorylated by CDC14B in G2 phase, leading to its reassociation with the APC/C, and allowing an efficient G2 DNA damage checkpoint. Phosphorylated by MAK. In terms of processing, ubiquitinated by the SCF(CCNF) E3 ubiquitin-protein ligase complex; leading to its degradation by the proteasome. In terms of tissue distribution, isoform 2 is expressed at high levels in heart, liver, spleen and some cancer cell lines whereas isoform 3 is expressed only at low levels in these tissues.

The protein localises to the nucleus. It localises to the cytoplasm. It functions in the pathway protein modification; protein ubiquitination. Its function is as follows. Substrate-specific adapter for the anaphase promoting complex/cyclosome (APC/C) E3 ubiquitin-protein ligase complex. Associates with the APC/C in late mitosis, in replacement of CDC20, and activates the APC/C during anaphase and telophase. The APC/C remains active in degrading substrates to ensure that positive regulators of the cell cycle do not accumulate prematurely. At the G1/S transition FZR1 is phosphorylated, leading to its dissociation from the APC/C. Following DNA damage, it is required for the G2 DNA damage checkpoint: its dephosphorylation and reassociation with the APC/C leads to the ubiquitination of PLK1, preventing entry into mitosis. Acts as an adapter for APC/C to target the DNA-end resection factor RBBP8/CtIP for ubiquitination and subsequent proteasomal degradation. Through the regulation of RBBP8/CtIP protein turnover, may play a role in DNA damage response, favoring DNA double-strand repair through error-prone non-homologous end joining (NHEJ) over error-free, RBBP8-mediated homologous recombination (HR). The protein is Fizzy-related protein homolog of Homo sapiens (Human).